Here is a 299-residue protein sequence, read N- to C-terminus: Protein charybde (299 aa).

Positions 73–103 (LNTRPSATPPSAGGGGPLAGGGSVGMTTPKQ) are disordered. Residues 84–96 (AGGGGPLAGGGSV) are compositionally biased toward gly residues.

The protein belongs to the DDIT4 family.

It localises to the cytoplasm. Its function is as follows. Inhibits cell growth by regulating the Tor pathway upstream of the Tsc1-Tsc2 complex and downstream of Akt1. Acts as a cell death activator during head development. This Drosophila melanogaster (Fruit fly) protein is Protein charybde (chrb).